A 419-amino-acid chain; its full sequence is Synaptosomal-associated protein 47 (419 aa).

T-SNARE coiled-coil homology domains are found at residues 108–170 and 356–418; these read PQGA…LSEL and VLQP…MRKL.

Belongs to the SVAP1 family.

May play a role in intracellular membrane fusion. This chain is Synaptosomal-associated protein 47 (snap47), found in Danio rerio (Zebrafish).